A 95-amino-acid chain; its full sequence is MAISRSEVEHVAKLARLKFSQEEIEEFTVQLSKIIDYVNKLNELDTENVEPTAHIVPIHNVFREDEVKPSMDRDKILMNAPYKENGCFKVPKIIE.

It belongs to the GatC family. In terms of assembly, heterotrimer of A, B and C subunits.

It catalyses the reaction L-glutamyl-tRNA(Gln) + L-glutamine + ATP + H2O = L-glutaminyl-tRNA(Gln) + L-glutamate + ADP + phosphate + H(+). The enzyme catalyses L-aspartyl-tRNA(Asn) + L-glutamine + ATP + H2O = L-asparaginyl-tRNA(Asn) + L-glutamate + ADP + phosphate + 2 H(+). Its function is as follows. Allows the formation of correctly charged Asn-tRNA(Asn) or Gln-tRNA(Gln) through the transamidation of misacylated Asp-tRNA(Asn) or Glu-tRNA(Gln) in organisms which lack either or both of asparaginyl-tRNA or glutaminyl-tRNA synthetases. The reaction takes place in the presence of glutamine and ATP through an activated phospho-Asp-tRNA(Asn) or phospho-Glu-tRNA(Gln). The protein is Aspartyl/glutamyl-tRNA(Asn/Gln) amidotransferase subunit C of Thermoanaerobacter pseudethanolicus (strain ATCC 33223 / 39E) (Clostridium thermohydrosulfuricum).